We begin with the raw amino-acid sequence, 176 residues long: ATP-dependent protease subunit HslV (176 aa).

Residue T2 is part of the active site. Positions 157, 160, and 163 each coordinate Na(+).

It belongs to the peptidase T1B family. HslV subfamily. As to quaternary structure, a double ring-shaped homohexamer of HslV is capped on each side by a ring-shaped HslU homohexamer. The assembly of the HslU/HslV complex is dependent on binding of ATP.

Its subcellular location is the cytoplasm. The enzyme catalyses ATP-dependent cleavage of peptide bonds with broad specificity.. With respect to regulation, allosterically activated by HslU binding. Its function is as follows. Protease subunit of a proteasome-like degradation complex believed to be a general protein degrading machinery. The protein is ATP-dependent protease subunit HslV of Klebsiella pneumoniae (strain 342).